The chain runs to 573 residues: LysM domain-containing protein ARB_01155/01156 (573 aa).

A signal peptide spans 1 to 18; sequence MIPRNLISGLFLLPFVVA. N-linked (GlcNAc...) asparagine glycosylation is found at asparagine 46, asparagine 71, and asparagine 283. One can recognise a LysM domain in the interval 373–419; it reads RYYEVVAGDQCNTIALHFGITVDAFLSLNTQIDERCSNLWIAYAYCV. Residues 375–405 are lysM domain; that stretch reads YEVVAGDQCNTIALHFGITVDAFLSLNTQID.

It is found in the secreted. Might have a role in sequestration of chitin oligosaccharides (breakdown products of fungal cell walls that are released during invasion and act as triggers of host immunity) to dampen host defense. This is LysM domain-containing protein ARB_01155/01156 from Arthroderma benhamiae (strain ATCC MYA-4681 / CBS 112371) (Trichophyton mentagrophytes).